A 138-amino-acid polypeptide reads, in one-letter code: MNTETNALPAWLDKVRWDDNGLVPVIAQEASTNDVLMFAWMNREALAKTIETQRAVYYSRSRKRLWFKGEESGHVQHVHEVRLDCDEDVVLLKVEQVSGIACHTGRHSCFFQKFEGTVDNGDWVAVEPVLKDPEHIYK.

Residue aspartate 84 coordinates Mg(2+). Cysteine 85 is a Zn(2+) binding site. The Mg(2+) site is built by aspartate 86 and aspartate 88. Cysteine 102 and cysteine 109 together coordinate Zn(2+).

It belongs to the PRA-CH family. Homodimer. Mg(2+) is required as a cofactor. It depends on Zn(2+) as a cofactor.

The protein resides in the cytoplasm. The enzyme catalyses 1-(5-phospho-beta-D-ribosyl)-5'-AMP + H2O = 1-(5-phospho-beta-D-ribosyl)-5-[(5-phospho-beta-D-ribosylamino)methylideneamino]imidazole-4-carboxamide. The protein operates within amino-acid biosynthesis; L-histidine biosynthesis; L-histidine from 5-phospho-alpha-D-ribose 1-diphosphate: step 3/9. Its function is as follows. Catalyzes the hydrolysis of the adenine ring of phosphoribosyl-AMP. The chain is Phosphoribosyl-AMP cyclohydrolase from Burkholderia lata (strain ATCC 17760 / DSM 23089 / LMG 22485 / NCIMB 9086 / R18194 / 383).